The chain runs to 156 residues: Small ribosomal subunit protein uS7 (156 aa).

The protein belongs to the universal ribosomal protein uS7 family. Part of the 30S ribosomal subunit. Contacts proteins S9 and S11.

One of the primary rRNA binding proteins, it binds directly to 16S rRNA where it nucleates assembly of the head domain of the 30S subunit. Is located at the subunit interface close to the decoding center, probably blocks exit of the E-site tRNA. The chain is Small ribosomal subunit protein uS7 from Shewanella loihica (strain ATCC BAA-1088 / PV-4).